A 340-amino-acid chain; its full sequence is HTH-type transcriptional repressor PurR (340 aa).

Positions 2 to 56 constitute an HTH lacI-type domain; it reads ATIKDVAKLVGVSTTTVSHVINKTRFVAEDTTKAVWEAIASLNYSPSAVARSLKV. The segment at residues 4-23 is a DNA-binding region (H-T-H motif); that stretch reads IKDVAKLVGVSTTTVSHVIN. A DNA-binding region spans residues 48–56; sequence SAVARSLKV. Tyr-73, Lys-188, Thr-190, Phe-219, and Asp-273 together coordinate hypoxanthine.

In terms of assembly, homodimer.

It functions in the pathway purine metabolism; purine nucleotide biosynthesis [regulation]. Its function is as follows. Is the main repressor of the genes involved in the de novo synthesis of purine nucleotides, regulating purB, purC, purEK, purF, purHD, purL, purMN and guaBA expression. PurR is allosterically activated to bind its cognate DNA by binding the purine corepressors, hypoxanthine or guanine, thereby effecting transcription repression. The sequence is that of HTH-type transcriptional repressor PurR from Glaesserella parasuis serovar 5 (strain SH0165) (Haemophilus parasuis).